The primary structure comprises 500 residues: Lysine--tRNA ligase (500 aa).

Mg(2+) contacts are provided by Glu410 and Glu417.

The protein belongs to the class-II aminoacyl-tRNA synthetase family. As to quaternary structure, homodimer. Requires Mg(2+) as cofactor.

It localises to the cytoplasm. It carries out the reaction tRNA(Lys) + L-lysine + ATP = L-lysyl-tRNA(Lys) + AMP + diphosphate. In Shewanella oneidensis (strain ATCC 700550 / JCM 31522 / CIP 106686 / LMG 19005 / NCIMB 14063 / MR-1), this protein is Lysine--tRNA ligase.